Consider the following 795-residue polypeptide: Inactive N-acetylated-alpha-linked acidic dipeptidase-like protein 2 (795 aa).

A disordered region spans residues 1-38; it reads MGENEASLPNTSLQGKKMAYQKVHADQRAPGHSQYLDN. At 1 to 121 the chain is on the cytoplasmic side; sequence MGENEASLPN…RSAPKSNRCN (121 aa). The residue at position 92 (serine 92) is a Phosphoserine. Residues 122–142 form a helical; Signal-anchor for type II membrane protein membrane-spanning segment; it reads FCHVLKILCTATILFIFGILI. The Extracellular portion of the chain corresponds to 143–795; that stretch reads GYYVHTNCPS…VFKSVLDGKN (653 aa). N-linked (GlcNAc...) asparagine glycosylation is found at asparagine 295, asparagine 373, asparagine 534, and asparagine 759.

The protein belongs to the peptidase M28 family. M28B subfamily. As to expression, expressed at higher level in kidney and placenta. In embryo, it is mainly confined to duodenal and stomach endoderm, mesonephros, metanephros and pancreas.

The protein resides in the membrane. Functionally, may be catalytically inactive. This Homo sapiens (Human) protein is Inactive N-acetylated-alpha-linked acidic dipeptidase-like protein 2 (NAALADL2).